The following is a 93-amino-acid chain: Pancreatic polypeptide prohormone (93 aa).

A signal peptide spans 1 to 29; the sequence is MPAACRCLFLLLLSACVALLLQPPLGTRG. A Tyrosine amide modification is found at Tyr-65. A propeptide spanning residues 89 to 93 is cleaved from the precursor; it reads ELMDE.

This sequence belongs to the NPY family.

It localises to the secreted. Functionally, hormone secreted by pancreatic cells that acts as a regulator of pancreatic and gastrointestinal functions probably by signaling through the G protein-coupled receptor NPY4R2. The protein is Pancreatic polypeptide prohormone (PPY) of Canis lupus familiaris (Dog).